Reading from the N-terminus, the 58-residue chain is Large ribosomal subunit protein bL32 (58 aa).

This sequence belongs to the bacterial ribosomal protein bL32 family.

This is Large ribosomal subunit protein bL32 from Sulfurihydrogenibium sp. (strain YO3AOP1).